Reading from the N-terminus, the 77-residue chain is MKQVDCIGLYCPEPVFRARKAMEESEVGEIIEILADDPAAESDIPVLVKKLGQELVEFEKLEDGVLRFVVKIVKEVR.

Cys-11 acts as the Cysteine persulfide intermediate in catalysis.

It belongs to the sulfur carrier protein TusA family.

This is Putative sulfur carrier protein AF_0188 from Archaeoglobus fulgidus (strain ATCC 49558 / DSM 4304 / JCM 9628 / NBRC 100126 / VC-16).